The following is a 543-amino-acid chain: CTP synthase (543 aa).

An amidoligase domain region spans residues 1–265 (MARYIFITGG…DDEVLAAFGI (265 aa)). A CTP-binding site is contributed by S13. S13 contacts UTP. 14–19 (SLGKGL) is a binding site for ATP. Y54 contributes to the L-glutamine binding site. Position 71 (D71) interacts with ATP. 2 residues coordinate Mg(2+): D71 and E139. CTP-binding positions include 146–148 (DIE), 186–191 (KTKPTQ), and K222. UTP-binding positions include 186–191 (KTKPTQ) and K222. 238–240 (RDV) provides a ligand contact to ATP. The region spanning 291 to 542 (TIAIVGKYTG…IQAAVVQSRL (252 aa)) is the Glutamine amidotransferase type-1 domain. G353 contacts L-glutamine. C380 functions as the Nucleophile; for glutamine hydrolysis in the catalytic mechanism. L-glutamine contacts are provided by residues 381–384 (FGMQ), E404, and R470. Catalysis depends on residues H515 and E517.

This sequence belongs to the CTP synthase family. As to quaternary structure, homotetramer.

It catalyses the reaction UTP + L-glutamine + ATP + H2O = CTP + L-glutamate + ADP + phosphate + 2 H(+). The catalysed reaction is L-glutamine + H2O = L-glutamate + NH4(+). It carries out the reaction UTP + NH4(+) + ATP = CTP + ADP + phosphate + 2 H(+). The protein operates within pyrimidine metabolism; CTP biosynthesis via de novo pathway; CTP from UDP: step 2/2. With respect to regulation, allosterically activated by GTP, when glutamine is the substrate; GTP has no effect on the reaction when ammonia is the substrate. The allosteric effector GTP functions by stabilizing the protein conformation that binds the tetrahedral intermediate(s) formed during glutamine hydrolysis. Inhibited by the product CTP, via allosteric rather than competitive inhibition. Catalyzes the ATP-dependent amination of UTP to CTP with either L-glutamine or ammonia as the source of nitrogen. Regulates intracellular CTP levels through interactions with the four ribonucleotide triphosphates. This is CTP synthase from Bradyrhizobium sp. (strain BTAi1 / ATCC BAA-1182).